A 508-amino-acid chain; its full sequence is Glutamate--cysteine ligase, chloroplastic (508 aa).

The transit peptide at 1-59 (MTTIFRLASSSSPSLRHDATPHNFHIRKTSISNTFSFSSKNSLSFKRILTSGGSRRFIV) directs the protein to the chloroplast. Cystine bridges form between Cys-172–Cys-392 and Cys-335–Cys-350.

This sequence belongs to the carboxylate-amine ligase family. Glutamate--cysteine ligase type 2 subfamily. As to quaternary structure, homodimer or monomer when oxidized or reduced, respectively. In terms of processing, the Cys-172-Cys-392 disulfide bridge is known to modulate the enzyme activity according to the redox status. The oxidized form constitutes the active enzyme.

The protein resides in the plastid. The protein localises to the chloroplast. The enzyme catalyses L-cysteine + L-glutamate + ATP = gamma-L-glutamyl-L-cysteine + ADP + phosphate + H(+). The protein operates within sulfur metabolism; glutathione biosynthesis; glutathione from L-cysteine and L-glutamate: step 1/2. The sequence is that of Glutamate--cysteine ligase, chloroplastic (GSH1) from Medicago truncatula (Barrel medic).